Here is a 523-residue protein sequence, read N- to C-terminus: MTNIHHHKILILDFGSQYTQLIARRVREIGVYCELWAWDVTEEQIREFNPTGIILSGGPESTTEANSPRAPEYVFNAGVPVLGICYGMQTMAMQLGGLTETSTHREFGYAEVSLRNPTALFDHLNDDATTSQTTLDVWMSHGDKVTRLPDNFQITGMTSTCPIAAMSDESRRFYGVQFHPEVTHTKCGQKLLQNFVVDICGCETNWTAENIIEDAVARIKAQVGGDEVILGLSGGVDSSVTALLLHRAIGKNLHCVFVDNGLLRLNEGDQVMEMFGDKFGLNIIRVEAEDRFLEALKGIDEPEAKRKTIGKVFVDVFDDEAKKLTDVKWLAQGTIYPDVIESAASKTGKAHVIKSHHNVGGLPDYMKLGLVEPLRELFKDEVRKIGLALGLPAEMLNRHPFPGPGLGVRVLGEIKKEYCDLLRKADAIFIEELHKADWYYKVSQAFSVFLPVKSVGVMGDGRKYDWVISLRAVETIDFMTAHWANLPYDLLGKISNRIINEVNSISRVVYDISGKPPATIEWE.

In terms of domain architecture, Glutamine amidotransferase type-1 spans 8-205 (KILILDFGSQ…VVDICGCETN (198 aa)). The active-site Nucleophile is Cys85. Catalysis depends on residues His179 and Glu181. The GMPS ATP-PPase domain occupies 206 to 398 (WTAENIIEDA…LGLPAEMLNR (193 aa)). Residue 233-239 (SGGVDSS) coordinates ATP.

Homodimer.

The enzyme catalyses XMP + L-glutamine + ATP + H2O = GMP + L-glutamate + AMP + diphosphate + 2 H(+). Its pathway is purine metabolism; GMP biosynthesis; GMP from XMP (L-Gln route): step 1/1. In terms of biological role, catalyzes the synthesis of GMP from XMP. This Histophilus somni (strain 129Pt) (Haemophilus somnus) protein is GMP synthase [glutamine-hydrolyzing].